The primary structure comprises 1020 residues: Protein SCAR3 (1020 aa).

Disordered regions lie at residues 167–198 (NLSQ…DMSR), 351–382 (DEKP…LRKR), and 802–827 (DYLS…GRKE). Residues 174–191 (KFQKDKKHCKMKKKKTSS) show a composition bias toward basic residues. Positions 365-382 (FHSKDNENDKSESGLRKR) are enriched in basic and acidic residues. Residues 802 to 814 (DYLSDNHSLSNSE) are compositionally biased toward polar residues. Residues 954-972 (ETGDFLQQIRTQQFNLRPV) form the WH2 domain.

The protein belongs to the SCAR/WAVE family. Binds BRK1. Interacts with SPK1, ABI1, ABI2, ABI3 and ABI4. In terms of tissue distribution, expressed in expanding cotyledons, expanding leaves and expanding siliques containing developing embryos. Detected in unopened flower buds. Reduced expression in mature leaves and mature cotyledons.

It is found in the cytoplasm. It localises to the cytoskeleton. Involved in regulation of actin and microtubule organization. Part of a WAVE complex that activates the Arp2/3 complex. Regulates trichome branch positioning and expansion. The chain is Protein SCAR3 (SCAR3) from Arabidopsis thaliana (Mouse-ear cress).